The following is a 354-amino-acid chain: Rhodopsin (354 aa).

Over 1–36 (MNGTEGPNFYIPMSNKTGVVRSPFEYPQYYLAEPWK) the chain is Extracellular. N-linked (GlcNAc...) asparagine glycans are attached at residues N2 and N15. Residues 37 to 61 (YSILAAYMFLLILLGFPINFMTLYV) traverse the membrane as a helical segment. At 62–73 (TIQHKKLRTPLN) the chain is on the cytoplasmic side. A helical transmembrane segment spans residues 74-96 (YILLNLAFANHFMVLCGFTITLY). Residues 97 to 110 (TSLHGYFVFGQSGC) are Extracellular-facing. C110 and C187 are disulfide-bonded. Residues 111-133 (YFEGFFATLGGEIALWSLVALAI) traverse the membrane as a helical segment. The 'Ionic lock' involved in activated form stabilization signature appears at 134 to 136 (ERY). At 134-152 (ERYIVVCKPMSNFRFGENH) the chain is on the cytoplasmic side. A helical membrane pass occupies residues 153–173 (AMMGVAFTWIMALACAVPPLF). Residues 174–202 (GWSRYIPEGMQCSCGVDYYTLKPEINNES) lie on the Extracellular side of the membrane. The chain crosses the membrane as a helical span at residues 203 to 224 (FVIYMFVVHFLIPLIIITFCYG). The Cytoplasmic portion of the chain corresponds to 225–252 (RLVCTVKEAAAQQQESATTQKAEKEVTR). The chain crosses the membrane as a helical span at residues 253–274 (MVIIMVIFFLICWVPYAYVAFY). Over 275–286 (IFCNQGSEFGPI) the chain is Extracellular. The helical transmembrane segment at 287 to 308 (FMTVPAFFAKSSAIYNPVIYIM) threads the bilayer. K296 is subject to N6-(retinylidene)lysine. The Cytoplasmic portion of the chain corresponds to 309 to 354 (LNKQFRNCMITTLCCGKNPFGDDDASSAATSKTEATSVSTSQVSPA). S-palmitoyl cysteine attachment occurs at residues C322 and C323. The interval 332–354 (DASSAATSKTEATSVSTSQVSPA) is disordered. Positions 334 to 354 (SSAATSKTEATSVSTSQVSPA) are enriched in low complexity.

The protein belongs to the G-protein coupled receptor 1 family. Opsin subfamily. In terms of processing, contains one covalently linked retinal chromophore. Upon light absorption, the covalently bound 11-cis-retinal is converted to all-trans-retinal. After hydrolysis of the Schiff base and release of the covalently bound all-trans-retinal, active rhodopsin is regenerated by binding of a fresh molecule of 11-cis-retinal.

It localises to the membrane. Its subcellular location is the cell projection. It is found in the cilium. The protein localises to the photoreceptor outer segment. Its function is as follows. Photoreceptor required for image-forming vision at low light intensity. Required for photoreceptor cell viability after birth. Light-induced isomerization of 11-cis to all-trans retinal triggers a conformational change that activates signaling via G-proteins. Subsequent receptor phosphorylation mediates displacement of the bound G-protein alpha subunit by arrestin and terminates signaling. This Rana temporaria (European common frog) protein is Rhodopsin (RHO).